Consider the following 300-residue polypeptide: Mitochondrial carnitine/acylcarnitine carrier-like protein (300 aa).

Solcar repeat units follow at residues 2-93 (ADAW…MEGL), 102-201 (LTIS…FKRF), and 211-298 (LGQG…TRSS). A run of 6 helical transmembrane segments spans residues 8-28 (LASGTVGGAAQLVVGHPFDTI), 64-84 (GLYKGMGAPLATVAAFNAVLF), 108-128 (FVAGAGAGFAVSFLACPTELI), 176-195 (GLFPTFAREVPGNATMFAAY), 211-231 (LGQGSLIMAGGVAGASFWGIV), and 273-292 (GFGPAMARSVPANAACFLAY).

Belongs to the mitochondrial carrier (TC 2.A.29) family. High expression in cotyledons, leaves, flowers and developing siliques. Lower expression in roots and maturing siliques. Not detected in meristematic tissues.

It localises to the mitochondrion inner membrane. Involved in photorespiratory metabolism. Acts probably as a carrier for a glycine decarboxylase (GDC) cofactor or, alternatively, may act as a mitochondrial glycine shuttle. Involved in the transition from the embryonic stage to the juvenile autotrophic stage. The sequence is that of Mitochondrial carnitine/acylcarnitine carrier-like protein (BOU) from Arabidopsis thaliana (Mouse-ear cress).